A 1193-amino-acid polypeptide reads, in one-letter code: DNA-directed RNA polymerase subunit beta (1193 aa).

The span at 1152-1161 (IEMRDLEDDE) shows a compositional bias: acidic residues. The disordered stretch occupies residues 1152 to 1193 (IEMRDLEDDEETKKADGLALSNDEDAADLAPVDLERDAVTKE). Over residues 1184–1193 (DLERDAVTKE) the composition is skewed to basic and acidic residues.

Belongs to the RNA polymerase beta chain family. In terms of assembly, the RNAP catalytic core consists of 2 alpha, 1 beta, 1 beta' and 1 omega subunit. When a sigma factor is associated with the core the holoenzyme is formed, which can initiate transcription.

It catalyses the reaction RNA(n) + a ribonucleoside 5'-triphosphate = RNA(n+1) + diphosphate. In terms of biological role, DNA-dependent RNA polymerase catalyzes the transcription of DNA into RNA using the four ribonucleoside triphosphates as substrates. This is DNA-directed RNA polymerase subunit beta from Bacillus pumilus (strain SAFR-032).